The sequence spans 1012 residues: Antigenic heat-stable 120 kDa protein (1012 aa).

2 disordered regions span residues 1-73 and 348-396; these read DTSE…TSDP and GQSK…PQSQ. Basic and acidic residues predominate over residues 12-27; that stretch reads EYTEEQKQTLEQEQKE. Positions 47–61 are enriched in low complexity; sequence SASSAQSTPSMSALS. Composition is skewed to polar residues over residues 62–73, 348–373, and 380–396; these read GNISPDSQTSDP, GQSK…QYKQ, and PTNQ…PQSQ.

The protein localises to the cytoplasm. The polypeptide is Antigenic heat-stable 120 kDa protein (sca4) (Rickettsia slovaca).